The primary structure comprises 676 residues: DNA ligase (676 aa).

Residues Asp34 to Asp38, Ser83 to Leu84, and Glu117 contribute to the NAD(+) site. Residue Lys119 is the N6-AMP-lysine intermediate of the active site. The NAD(+) site is built by Arg140, Glu177, Lys285, and Lys309. Zn(2+) is bound by residues Cys403, Cys406, Cys427, and Cys434. The BRCT domain maps to Asn595–Gly676.

It belongs to the NAD-dependent DNA ligase family. LigA subfamily. Mg(2+) serves as cofactor. Mn(2+) is required as a cofactor.

The enzyme catalyses NAD(+) + (deoxyribonucleotide)n-3'-hydroxyl + 5'-phospho-(deoxyribonucleotide)m = (deoxyribonucleotide)n+m + AMP + beta-nicotinamide D-nucleotide.. Functionally, DNA ligase that catalyzes the formation of phosphodiester linkages between 5'-phosphoryl and 3'-hydroxyl groups in double-stranded DNA using NAD as a coenzyme and as the energy source for the reaction. It is essential for DNA replication and repair of damaged DNA. The protein is DNA ligase of Pelagibacter ubique (strain HTCC1062).